Reading from the N-terminus, the 691-residue chain is Seven transmembrane domain-containing tyrosine-protein kinase 1 (691 aa).

Topologically, residues 1–33 (MDTSCVSINQCGFCTYLFNRSIPLAGEGDGAIM) are extracellular. Residues 34–54 (FNTMVDSMALGYIFSALYLLF) form a helical membrane-spanning segment. At 55–126 (RLQRSYTYLQ…PRIINSTYFK (72 aa)) the chain is on the cytoplasmic side. Residues 127–144 (YTLFVSLWLAFEGLLLLF) traverse the membrane as a helical segment. At 145–153 (LPPNSLAYP) the chain is on the extracellular side. The chain crosses the membrane as a helical span at residues 154 to 176 (AFVIIVGTGHIVTDNWVLVFLYG). Topologically, residues 177–186 (KEDDRFSARR) are cytoplasmic. The helical transmembrane segment at 187 to 207 (SFYSCTLLYLIICCTTLASFF) threads the bilayer. Residues 208 to 227 (DDQTMCKKNDCQTFMFQDEY) are Extracellular-facing. The helical transmembrane segment at 228 to 248 (TSLAITVASLVVYTIVLGMTI) threads the bilayer. Residues 249 to 258 (KRSFLRPTGR) lie on the Cytoplasmic side of the membrane. A helical membrane pass occupies residues 259-279 (IWLLFLMGYNCISSVGALLNI). Over 280–284 (LDVDA) the chain is Extracellular. Residues 285-305 (GYCFLGIAAIIYSFSYGPLLF) form a helical membrane-spanning segment. Topologically, residues 306–691 (RTCGNDTNLL…GAEEFHYIDG (386 aa)) are cytoplasmic. The Protein kinase domain maps to 363 to 634 (FKFGQVIGEG…ANVPISNTYV (272 aa)). ATP contacts are provided by residues 369–377 (IGEGYFGEV) and lysine 390. Aspartate 493 acts as the Proton acceptor in catalysis.

Belongs to the protein kinase superfamily. TKL Tyr protein kinase family.

The protein resides in the membrane. The enzyme catalyses L-tyrosyl-[protein] + ATP = O-phospho-L-tyrosyl-[protein] + ADP + H(+). This Dictyostelium discoideum (Social amoeba) protein is Seven transmembrane domain-containing tyrosine-protein kinase 1 (7tmk1).